A 243-amino-acid chain; its full sequence is R-spondin-2 (243 aa).

A signal peptide spans 1-21 (MQFRLFSFALIILNCMDYSHC). Intrachain disulfides connect C40–C46, C43–C52, C55–C74, C78–C93, C96–C104, C101–C110, C113–C124, C128–C141, C145–C187, C156–C163, and C196–C203. An FU repeat occupies 90–134 (MNRCARCRIENCDSCFSKDFCTKCKVGFYLHRGRCFDECPDGFAP). Residues 144-204 (GCEVGHWSEW…RCKMTMRHCP (61 aa)) enclose the TSP type-1 domain. The N-linked (GlcNAc...) asparagine glycan is linked to N160. The segment covering 204 to 224 (PGGKRTPKAKEKRNKKKKRKL) has biased composition (basic residues). Positions 204–243 (PGGKRTPKAKEKRNKKKKRKLIERAQEQHSVFLATDRANQ) are disordered.

The protein belongs to the R-spondin family. As to quaternary structure, interacts with WNT1. Binds heparin. Interacts with LGR4, LGR5 and LGR6. Interacts with E3 ubiquitin ligases RNF43 and ZNRF3.

It localises to the secreted. Functionally, activator of the canonical Wnt signaling pathway by acting as a ligand for LGR4-6 receptors. Upon binding to LGR4-6 (LGR4, LGR5 or LGR6), LGR4-6 associate with phosphorylated LRP6 and frizzled receptors that are activated by extracellular Wnt receptors, triggering the canonical Wnt signaling pathway to increase expression of target genes. Also regulates the canonical Wnt/beta-catenin-dependent pathway and non-canonical Wnt signaling by acting as an inhibitor of ZNRF3, an important regulator of the Wnt signaling pathway. During embryonic development, plays a crucial role in limb specification, amplifying the Wnt signaling pathway independently of LGR4-6 receptors, possibly by acting as a direct antagonistic ligand to RNF43 and ZNRF3, hence governing the number of limbs an embryo should form. This chain is R-spondin-2 (RSPO2), found in Homo sapiens (Human).